The primary structure comprises 202 residues: Nucleoside triphosphate pyrophosphatase (202 aa).

Aspartate 79 acts as the Proton acceptor in catalysis.

This sequence belongs to the Maf family. It depends on a divalent metal cation as a cofactor.

It localises to the cytoplasm. The enzyme catalyses a ribonucleoside 5'-triphosphate + H2O = a ribonucleoside 5'-phosphate + diphosphate + H(+). The catalysed reaction is a 2'-deoxyribonucleoside 5'-triphosphate + H2O = a 2'-deoxyribonucleoside 5'-phosphate + diphosphate + H(+). Nucleoside triphosphate pyrophosphatase. May have a dual role in cell division arrest and in preventing the incorporation of modified nucleotides into cellular nucleic acids. In Rhodopseudomonas palustris (strain HaA2), this protein is Nucleoside triphosphate pyrophosphatase.